A 360-amino-acid polypeptide reads, in one-letter code: Histidinol-phosphate aminotransferase (360 aa).

Lys-223 carries the post-translational modification N6-(pyridoxal phosphate)lysine.

It belongs to the class-II pyridoxal-phosphate-dependent aminotransferase family. Histidinol-phosphate aminotransferase subfamily. Homodimer. Requires pyridoxal 5'-phosphate as cofactor.

The enzyme catalyses L-histidinol phosphate + 2-oxoglutarate = 3-(imidazol-4-yl)-2-oxopropyl phosphate + L-glutamate. Its pathway is amino-acid biosynthesis; L-histidine biosynthesis; L-histidine from 5-phospho-alpha-D-ribose 1-diphosphate: step 7/9. The polypeptide is Histidinol-phosphate aminotransferase (hisC) (Bacillus subtilis (strain 168)).